Consider the following 69-residue polypeptide: Putative membrane protein insertion efficiency factor (69 aa).

This sequence belongs to the UPF0161 family.

The protein localises to the cell inner membrane. Could be involved in insertion of integral membrane proteins into the membrane. In Nitrosomonas europaea (strain ATCC 19718 / CIP 103999 / KCTC 2705 / NBRC 14298), this protein is Putative membrane protein insertion efficiency factor.